The primary structure comprises 694 residues: Frizzled-2 (694 aa).

The N-terminal stretch at 1–22 (MRHNRLKVLILGLVLLLTSCRA) is a signal peptide. Topologically, residues 23–315 (DGPLHSADHG…GPFFSNDEKD (293 aa)) are extracellular. An FZ domain is found at 59–180 (DPNLRCEEIT…GDPDNLCMEQ (122 aa)). 5 cysteine pairs are disulfide-bonded: C64-C125, C72-C118, C109-C147, C136-C177, and C140-C164. N78 is a glycosylation site (N-linked (GlcNAc...) asparagine). The interval 175-253 (NLCMEQPSYT…QGEKASGKEC (79 aa)) is disordered. Gly residues predominate over residues 187–224 (GSGGSSGGSGGSGSGSGSGGKRKQGGSGSGGSGAGGSS). N288 carries N-linked (GlcNAc...) asparagine glycosylation. The helical transmembrane segment at 316 to 336 (FAGLWIALWSGLCFCSTLMTL) threads the bilayer. Over 337–352 (TTFIIDTERFKYPERP) the chain is Cytoplasmic. The chain crosses the membrane as a helical span at residues 353–373 (IVFLSACYFMVAVGYLSRNFL). The Extracellular portion of the chain corresponds to 374-397 (QNEEIACDGLLLRESSTGPHSCTL). The helical transmembrane segment at 398 to 418 (VFLLTYFFGMASSIWWVILSF) threads the bilayer. The Cytoplasmic portion of the chain corresponds to 419 to 439 (TWFLAAGLKWGNEAITKHSQY). The chain crosses the membrane as a helical span at residues 440 to 460 (FHLAAWLIPTVQSVAVLLLSA). Residues 461 to 482 (VDGDPILGICYVGNLNPDHLKT) are Extracellular-facing. Residues 483-503 (FVLAPLFVYLVIGTTFLMAGF) traverse the membrane as a helical segment. Over 504–534 (VSLFRIRSVIKQQGGVGAGVKADKLEKLMIR) the chain is Cytoplasmic. A helical membrane pass occupies residues 535–555 (IGIFSVLYTVPATIVIGCYLY). Topologically, residues 556-584 (EAAYFEDWIKALACPCAQVKGPGKKPLYS) are extracellular. A helical membrane pass occupies residues 585-605 (VLMLKYFMALAVGITSGVWIW). Residues 606–694 (SGKTLESWRR…VLKQPAASHV (89 aa)) are Cytoplasmic-facing. The short motif at 608-613 (KTLESW) is the Lys-Thr-X-X-X-Trp motif, mediates interaction with the PDZ domain of Dvl family members element. Residues 692–694 (SHV) carry the PDZ-binding motif.

This sequence belongs to the G-protein coupled receptor Fz/Smo family. As to quaternary structure, interacts with ATP6AP2.

Its subcellular location is the cell membrane. Its function is as follows. Receptor for Wnt proteins. Most of frizzled receptors are coupled to the beta-catenin canonical signaling pathway, which leads to the activation of disheveled proteins, inhibition of GSK-3 kinase, nuclear accumulation of beta-catenin and activation of Wnt target genes. A second signaling pathway involving PKC and calcium fluxes has been seen for some family members, but it is not yet clear if it represents a distinct pathway or if it can be integrated in the canonical pathway, as PKC seems to be required for Wnt-mediated inactivation of GSK-3 kinase. Both pathways seem to involve interactions with G-proteins. Required to coordinate the cytoskeletons of epidermal cells to produce a parallel array of cuticular hairs and bristles. The polypeptide is Frizzled-2 (fz2) (Drosophila melanogaster (Fruit fly)).